We begin with the raw amino-acid sequence, 202 residues long: LexA repressor (202 aa).

The segment at residues 28-48 (RAEIAAQLGFRSPNAAEEHLK) is a DNA-binding region (H-T-H motif). Catalysis depends on for autocatalytic cleavage activity residues Ser119 and Lys156.

This sequence belongs to the peptidase S24 family. In terms of assembly, homodimer.

It catalyses the reaction Hydrolysis of Ala-|-Gly bond in repressor LexA.. Its function is as follows. Represses a number of genes involved in the response to DNA damage (SOS response), including recA and lexA. Binds to the 16 bp palindromic sequence 5'-CTGTATATATATACAG-3'. In the presence of single-stranded DNA, RecA interacts with LexA causing an autocatalytic cleavage which disrupts the DNA-binding part of LexA, leading to derepression of the SOS regulon and eventually DNA repair. The protein is LexA repressor of Erwinia tasmaniensis (strain DSM 17950 / CFBP 7177 / CIP 109463 / NCPPB 4357 / Et1/99).